The following is a 613-amino-acid chain: DNA mismatch repair protein MutL (613 aa).

This sequence belongs to the DNA mismatch repair MutL/HexB family.

This protein is involved in the repair of mismatches in DNA. It is required for dam-dependent methyl-directed DNA mismatch repair. May act as a 'molecular matchmaker', a protein that promotes the formation of a stable complex between two or more DNA-binding proteins in an ATP-dependent manner without itself being part of a final effector complex. The polypeptide is DNA mismatch repair protein MutL (Janthinobacterium sp. (strain Marseille) (Minibacterium massiliensis)).